The primary structure comprises 530 residues: Estrogen receptor beta (530 aa).

The segment at 1-148 (MEIKNSPSSL…SPSAKRDAHF (148 aa)) is modulating. At Ser61 the chain carries Phosphoserine; alternate. Residue Ser61 is glycosylated (O-linked (GlcNAc) serine; alternate). Residues Ser87 and Ser105 each carry the phosphoserine; by MAPK modification. 2 NR C4-type zinc fingers span residues 149 to 169 (CAVC…CEGC) and 185 to 209 (CPAT…LRKC). Positions 149–214 (CAVCSDYASG…RLRKCYEVGM (66 aa)) form a DNA-binding region, nuclear receptor. The region spanning 264–498 (SPEQLVLTLL…DLLLEMLNAH (235 aa)) is the NR LBD domain. Polar residues predominate over residues 506–515 (SISGSECCST). The disordered stretch occupies residues 506–530 (SISGSECCSTEDSKSKEGSQNLQSQ).

The protein belongs to the nuclear hormone receptor family. NR3 subfamily. Binds DNA as a homodimer. Can form a heterodimer with ESR1. Interacts with NCOA1, NCOA3, NCOA5 and NCOA6 coactivators, leading to a strong increase of transcription of target genes. Interacts with UBE1C and AKAP13. Interacts with DNTTIP2. Interacts with CCDC62 in the presence of estradiol/E2; this interaction seems to enhance the transcription of target genes. Interacts with DNAAF4. Interacts with PRMT2. Interacts with CCAR2 (via N-terminus) in a ligand-independent manner. Interacts with RBM39, in the presence of estradiol (E2). Interacts with STUB1/CHIP. Phosphorylation at Ser-87 and Ser-105 recruits NCOA1. As to expression, expressed in prostate, ovary, Leydig cells and in epithelium of the efferent ductules and of the initial segment of the epididymis.

The protein localises to the nucleus. Its function is as follows. Nuclear hormone receptor. Binds estrogens with an affinity similar to that of ESR1/ER-alpha, and activates expression of reporter genes containing estrogen response elements (ERE) in an estrogen-dependent manner. This chain is Estrogen receptor beta (Esr2), found in Mus musculus (Mouse).